Reading from the N-terminus, the 548-residue chain is MEEDLFQLRQLPVVKFRRTGESARSEDDTASGEHEVQIEGVRAGLEAVELDDGAAVPKEFANPTDDTFMVEDAVEAIGFGKFQWKLSVLTGLAWMADAMEMMILSILAPQLHCEWRLPSWQVALLTSVVFVGMMSSSTLWGNISDQYGRKTGLKISVLWTLYYGILSAFAPVYSWILVLRGLVGFGIGGVPQSVTLYAEFLPMKARAKCILLIEVFWAIGTVFEVVLAVFVMPSLGWRWLLILSAVPLLLFAVLCFWLPESARYDVLSGNQEKAIATLKRIATENGAPMPLGKLIISRQEDRGKMRDLFTPHFRWTTLLLWFIWFSNAFSYYGLVLLTTELFQAGDVCSISSRKKAVEAKCSLACEYLSEEDYMDLLWTTLSEFPGVLVTLWIIDRLGRKKTMALCFVVFSFCSLLLFICVGRNMLTLLLFIARAFISGGFQAAYVYTPEVYPTATRALGLGTCSGMARVGALITPFIAQVMLESSVYLTLAVYSGCCLLAALASCFLPIETKGRGLQESSHREWGQEMVGRGAHGTGVARSNSGSQE.

The Cytoplasmic segment spans residues 1–87 (MEEDLFQLRQ…GFGKFQWKLS (87 aa)). Ser-25 and Ser-31 each carry phosphoserine. A helical membrane pass occupies residues 88–108 (VLTGLAWMADAMEMMILSILA). The Vesicular portion of the chain corresponds to 109–122 (PQLHCEWRLPSWQV). Residues 123 to 143 (ALLTSVVFVGMMSSSTLWGNI) traverse the membrane as a helical segment. Residues 144 to 156 (SDQYGRKTGLKIS) are Cytoplasmic-facing. A helical transmembrane segment spans residues 157 to 177 (VLWTLYYGILSAFAPVYSWIL). The Vesicular segment spans residues 178–180 (VLR). The chain crosses the membrane as a helical span at residues 181-201 (GLVGFGIGGVPQSVTLYAEFL). Topologically, residues 202 to 209 (PMKARAKC) are cytoplasmic. Residues 210-230 (ILLIEVFWAIGTVFEVVLAVF) traverse the membrane as a helical segment. Over 231–238 (VMPSLGWR) the chain is Vesicular. The chain crosses the membrane as a helical span at residues 239-259 (WLLILSAVPLLLFAVLCFWLP). Over 260–316 (ESARYDVLSGNQEKAIATLKRIATENGAPMPLGKLIISRQEDRGKMRDLFTPHFRWT) the chain is Cytoplasmic. The chain crosses the membrane as a helical span at residues 317–337 (TLLLWFIWFSNAFSYYGLVLL). The Vesicular segment spans residues 338-373 (TTELFQAGDVCSISSRKKAVEAKCSLACEYLSEEDY). Residues 374 to 394 (MDLLWTTLSEFPGVLVTLWII) form a helical membrane-spanning segment. The Cytoplasmic segment spans residues 395-401 (DRLGRKK). A helical membrane pass occupies residues 402–422 (TMALCFVVFSFCSLLLFICVG). Over 423 to 425 (RNM) the chain is Vesicular. Residues 426 to 446 (LTLLLFIARAFISGGFQAAYV) form a helical membrane-spanning segment. Over 447-457 (YTPEVYPTATR) the chain is Cytoplasmic. A helical transmembrane segment spans residues 458-478 (ALGLGTCSGMARVGALITPFI). Over 479–489 (AQVMLESSVYL) the chain is Vesicular. Residues 490–510 (TLAVYSGCCLLAALASCFLPI) traverse the membrane as a helical segment. The Cytoplasmic portion of the chain corresponds to 511 to 548 (ETKGRGLQESSHREWGQEMVGRGAHGTGVARSNSGSQE). The disordered stretch occupies residues 528 to 548 (EMVGRGAHGTGVARSNSGSQE). Ser-542 carries the phosphoserine modification.

The protein belongs to the major facilitator superfamily. As to expression, detected in brain and adrenal medulla.

It is found in the cytoplasmic vesicle. The protein localises to the secretory vesicle. The protein resides in the synaptic vesicle membrane. This Bos taurus (Bovine) protein is Synaptic vesicle 2-related protein (SVOP).